Here is a 422-residue protein sequence, read N- to C-terminus: Cytokine receptor-like factor 1 (422 aa).

The N-terminal stretch at 1–37 (MPAGRRGPAAQSARRPPPLLPLLLLLCVLGAPRAGSG) is a signal peptide. The region spanning 38 to 131 (AHTAVISPQD…SILAGSCLYV (94 aa)) is the Ig-like C2-type domain. 3 N-linked (GlcNAc...) asparagine glycosylation sites follow: Asn-92, Asn-104, and Asn-140. 2 Fibronectin type-III domains span residues 137–232 (KPVN…ILDV) and 237–341 (PPPD…TPRS). A disulfide bond links Cys-143 and Cys-153. N-linked (GlcNAc...) asparagine glycosylation is present at Asn-168. A disulfide bridge links Cys-184 with Cys-195. Ser-219 is subject to Phosphoserine. Residue Asn-292 is glycosylated (N-linked (GlcNAc...) asparagine). Residues 327–331 (WSEWS) carry the WSXWS motif motif. A disordered region spans residues 332 to 363 (HPTAASTPRSERPGPGGGACEPRGGEPSSGPV). Asn-382 is a glycosylation site (N-linked (GlcNAc...) asparagine). Residues 399 to 422 (HKTRNQDEGILPSGRRGTARGPAR) form a disordered region.

It belongs to the type I cytokine receptor family. Type 3 subfamily. In terms of assembly, forms covalent di- and tetramers. Forms a heteromeric complex with cardiotrophin-like cytokine CLCF1/CLC; the CRLF1-CLCF1 complex is a ligand for the ciliary neurotrophic factor receptor/CNTFR. The CRLF1-CLCF1 heterodimer binds SORL1 (via N-terminal ectodomain); within this complex, the interaction is mediated predominantly by the CRLF1 moiety. The tripartite signaling complex formed by CRLF1, CLCF1 and CNTFR also binds SORL1. In terms of tissue distribution, highest levels of expression observed in spleen, thymus, lymph node, appendix, bone marrow, stomach, placenta, heart, thyroid and ovary. Strongly expressed also in fetal lung.

Its subcellular location is the secreted. In terms of biological role, in complex with CLCF1, forms a heterodimeric neurotropic cytokine that plays a crucial role during neuronal development. May also play a regulatory role in the immune system. This is Cytokine receptor-like factor 1 (CRLF1) from Homo sapiens (Human).